The primary structure comprises 278 residues: Sulfur carrier protein FdhD (278 aa).

The active-site Cysteine persulfide intermediate is Cys121. 260–265 (FCKPGR) is a binding site for Mo-bis(molybdopterin guanine dinucleotide).

The protein belongs to the FdhD family.

Its subcellular location is the cytoplasm. Required for formate dehydrogenase (FDH) activity. Acts as a sulfur carrier protein that transfers sulfur from IscS to the molybdenum cofactor prior to its insertion into FDH. The polypeptide is Sulfur carrier protein FdhD (Salmonella agona (strain SL483)).